A 296-amino-acid polypeptide reads, in one-letter code: MFKSGFVTIIGRPNVGKSTLLNHIMGEKLSIVSSKPQTTRNNIQTILTGEEYQIVFVDTPGMHNPRHKLGEYMVKVAKESMNEVDVALFVTTPDVEVKRGDLHILEQLKSAKVPVFLVVNKIDETTEERLAATLKNYSEAFEFQEIIPISAQKGKNVDKLIELMVKHLNEGPKYYPDDMIIDKQERFIIAEIIREKALRFLSQEVPHGIAVEILQMKEENEKYKIEATIMCEKDSHKGIIIGKGGEMLKKISQSARKSAEKFLDKRVNMKIWVKVKKDWRDSPFVLGELGYKAPKK.

The Era-type G domain maps to Lys3–Glu170. A G1 region spans residues Gly11 to Ser18. Gly11–Ser18 is a binding site for GTP. A G2 region spans residues Gln37 to Asn41. The G3 stretch occupies residues Asp58–Gly61. Residues Asp58 to Met62 and Asn120 to Asp123 contribute to the GTP site. The interval Asn120 to Asp123 is G4. Residues Ile149–Ala151 are G5. Residues Leu201–Lys277 enclose the KH type-2 domain.

It belongs to the TRAFAC class TrmE-Era-EngA-EngB-Septin-like GTPase superfamily. Era GTPase family. As to quaternary structure, monomer.

It is found in the cytoplasm. The protein resides in the cell membrane. In terms of biological role, an essential GTPase that binds both GDP and GTP, with rapid nucleotide exchange. Plays a role in 16S rRNA processing and 30S ribosomal subunit biogenesis and possibly also in cell cycle regulation and energy metabolism. The sequence is that of GTPase Era from Clostridium acetobutylicum (strain ATCC 824 / DSM 792 / JCM 1419 / IAM 19013 / LMG 5710 / NBRC 13948 / NRRL B-527 / VKM B-1787 / 2291 / W).